Reading from the N-terminus, the 710-residue chain is PC3-like endoprotease variant B (710 aa).

The N-terminal stretch at 1–29 is a signal peptide; sequence MNYRGIYRRRYVFVLLLLVAVVNISYGWT. Asn-23, Asn-62, and Asn-190 each carry an N-linked (GlcNAc...) asparagine glycan. The propeptide occupies 30–152; sequence VLKNKDYKRR…QQKILERVKR (123 aa). The 323-residue stretch at 164 to 486 folds into the Peptidase S8 domain; sequence MWYLLNTGQA…FGRLDANAMV (323 aa). Catalysis depends on charge relay system residues Asp-202 and His-242. 2 disulfides stabilise this stretch: Cys-259–Cys-411 and Cys-351–Cys-381. Ser-419 serves as the catalytic Charge relay system. The 144-residue stretch at 495 to 638 folds into the P/Homo B domain; it reads LPAQRKCTAA…EERVIDTQTK (144 aa). Cysteines 501 and 527 form a disulfide. The disordered stretch occupies residues 668–710; it reads TIEGSTQDHVKPKEGAKEPWGNYRNTNNINNNSSTAFKRKKKQ. Positions 673 to 684 are enriched in basic and acidic residues; it reads TQDHVKPKEGAK. The segment covering 689–699 has biased composition (low complexity); it reads NYRNTNNINNN. Residues Asn-698 and Asn-699 are each glycosylated (N-linked (GlcNAc...) asparagine).

This sequence belongs to the peptidase S8 family. Furin subfamily. Predominantly in the body column.

Its function is as follows. Probably involved in the processing of hormone and other protein precursors at sites comprised of pairs of basic amino acid residues. The protein is PC3-like endoprotease variant B of Hydra vulgaris (Hydra).